A 143-amino-acid polypeptide reads, in one-letter code: Large ribosomal subunit protein uL13 (143 aa).

It belongs to the universal ribosomal protein uL13 family. As to quaternary structure, part of the 50S ribosomal subunit.

In terms of biological role, this protein is one of the early assembly proteins of the 50S ribosomal subunit, although it is not seen to bind rRNA by itself. It is important during the early stages of 50S assembly. The chain is Large ribosomal subunit protein uL13 from Chloroflexus aggregans (strain MD-66 / DSM 9485).